Reading from the N-terminus, the 574-residue chain is Membralin (574 aa).

Residues methionine 1 to arginine 27 are disordered. Residue serine 2 is modified to N-acetylserine. The chain crosses the membrane as a helical span at residues phenylalanine 69 to phenylalanine 89. Asparagine 180 is a glycosylation site (N-linked (GlcNAc...) asparagine). 3 helical membrane-spanning segments follow: residues threonine 293–leucine 313, isoleucine 337–isoleucine 357, and tyrosine 417–phenylalanine 437. Low complexity-rich tracts occupy residues leucine 461 to proline 470 and leucine 491 to glycine 501. 2 disordered regions span residues leucine 461 to valine 515 and arginine 546 to serine 574.

The protein belongs to the membralin family. In terms of assembly, interacts with ERLIN2. In terms of tissue distribution, detected in brain, spinal cord, lung, liver and kidney.

Its subcellular location is the endoplasmic reticulum membrane. Functionally, may have a role in the ERAD pathway required for clearance of misfolded proteins in the endoplasmic reticulum (ER). Promotes survival of motor neurons, probably by protecting against ER stress. The polypeptide is Membralin (Tmem259) (Mus musculus (Mouse)).